Consider the following 966-residue polypeptide: Integrator complex subunit 7 (966 aa).

Residues Ser-338 and Ser-809 each carry the phosphoserine modification. Residues 941-966 (LQQQAQQPLQPQPLPQPQPRSAYTRF) are disordered.

The protein belongs to the Integrator subunit 7 family. As to quaternary structure, component of the Integrator complex, composed of core subunits INTS1, INTS2, INTS3, INTS4, INTS5, INTS6, INTS7, INTS8, INTS9/RC74, INTS10, INTS11/CPSF3L, INTS12, INTS13, INTS14 and INTS15. The core complex associates with protein phosphatase 2A subunits PPP2CA and PPP2R1A, to form the Integrator-PP2A (INTAC) complex. Interacts with NABP2.

Its subcellular location is the nucleus. It localises to the chromosome. The protein resides in the cytoplasm. Component of the integrator complex, a multiprotein complex that terminates RNA polymerase II (Pol II) transcription in the promoter-proximal region of genes. The integrator complex provides a quality checkpoint during transcription elongation by driving premature transcription termination of transcripts that are unfavorably configured for transcriptional elongation: the complex terminates transcription by (1) catalyzing dephosphorylation of the C-terminal domain (CTD) of Pol II subunit POLR2A/RPB1 and SUPT5H/SPT5, (2) degrading the exiting nascent RNA transcript via endonuclease activity and (3) promoting the release of Pol II from bound DNA. The integrator complex is also involved in terminating the synthesis of non-coding Pol II transcripts, such as enhancer RNAs (eRNAs), small nuclear RNAs (snRNAs), telomerase RNAs and long non-coding RNAs (lncRNAs). May be not involved in the recruitment of cytoplasmic dynein to the nuclear envelope by different components of the INT complex. Plays a role in DNA damage response (DDR) signaling during the S phase. The chain is Integrator complex subunit 7 (Ints7) from Mus musculus (Mouse).